We begin with the raw amino-acid sequence, 362 residues long: Cobalt-precorrin-5B C(1)-methyltransferase (362 aa).

This sequence belongs to the CbiD family.

The enzyme catalyses Co-precorrin-5B + S-adenosyl-L-methionine = Co-precorrin-6A + S-adenosyl-L-homocysteine. It functions in the pathway cofactor biosynthesis; adenosylcobalamin biosynthesis; cob(II)yrinate a,c-diamide from sirohydrochlorin (anaerobic route): step 6/10. Functionally, catalyzes the methylation of C-1 in cobalt-precorrin-5B to form cobalt-precorrin-6A. The sequence is that of Cobalt-precorrin-5B C(1)-methyltransferase from Methanocaldococcus jannaschii (strain ATCC 43067 / DSM 2661 / JAL-1 / JCM 10045 / NBRC 100440) (Methanococcus jannaschii).